The chain runs to 663 residues: Nucleolar complex-associated protein 3 (663 aa).

The tract at residues 1 to 132 (MAKRNRSQFR…AKEDEPDTEE (132 aa)) is disordered. The span at 82–97 (GKVERKLHKAQEKPKD) shows a compositional bias: basic and acidic residues. Acidic residues predominate over residues 98–130 (DDEEDEDSNDSSEDDEGPNEEQEAEAKEDEPDT). The stretch at 363 to 408 (KKDRVHLSKKQRKARKEMQQIEEEMRNAEQAVSAEERERNQSEILK) forms a coiled coil. Position 395 is a phosphoserine (S395).

It belongs to the CBF/MAK21 family. In terms of assembly, forms a heterodimer with NOC2. This complex may be associated with pre-ribosomal particles. Also interacts with MCM2, MCM5 and ORC1.

It is found in the nucleus. The protein localises to the nucleolus. Its function is as follows. Required for synthesis of 60S ribosomal subunits and the transport of pre-ribosomes from the nucleoplasm to the cytoplasm. Also required for initiation of DNA replication. May function downstream of the origin recognition complex (ORC complex) in the loading of CDC6 and the minichromosome maintenance complex (MCM complex) onto chromatin during the G1 phase of the cell cycle. Essential for growth. The chain is Nucleolar complex-associated protein 3 (NOC3) from Saccharomyces cerevisiae (strain ATCC 204508 / S288c) (Baker's yeast).